Consider the following 949-residue polypeptide: Lon protease homolog, mitochondrial (949 aa).

A mitochondrion-targeting transit peptide spans 1 to 65 (MAASTGYVRL…VLPGGVQWRG (65 aa)). Disordered stretches follow at residues 68-94 (DSGN…TGEG) and 213-240 (EGLE…DELG). Positions 112–359 (LPLIAITRNP…KALSLLKKEF (248 aa)) constitute a Lon N-terminal domain. A compositionally biased stretch (basic residues) spans 223–232 (KSRRKLKRGK). 512 to 519 (GPPGVGKT) serves as a coordination point for ATP. In terms of domain architecture, Lon proteolytic spans 748-938 (VTPPGVVMGL…RDIFPIAFPR (191 aa)). Residues Ser844 and Lys887 contribute to the active site.

This sequence belongs to the peptidase S16 family. In terms of assembly, homohexamer. Organized in a ring with a central cavity. The ATP-binding and proteolytic domains (AP-domain) form a hexameric chamber, while the N-terminal domain is arranged as a trimer of dimers. DNA and RNA binding is stimulated by substrate and inhibited by ATP binding. Interacts with TWNK and mitochondrial DNA polymerase subunit POLG. As to expression, detected in liver &gt; heart &gt; kidney &gt; testis.

It localises to the mitochondrion matrix. The enzyme catalyses Hydrolysis of proteins in presence of ATP.. Its function is as follows. ATP-dependent serine protease that mediates the selective degradation of misfolded, unassembled or oxidatively damaged polypeptides as well as certain short-lived regulatory proteins in the mitochondrial matrix. Endogenous substrates include mitochondrial steroidogenic acute regulatory (StAR) protein, DELE1, helicase Twinkle (TWNK) and the large ribosomal subunit protein MRPL32/bL32m. MRPL32/bL32m is protected from degradation by LONP1 when it is bound to a nucleic acid (RNA), but TWNK is not. May also have a chaperone function in the assembly of inner membrane protein complexes. Participates in the regulation of mitochondrial gene expression and in the maintenance of the integrity of the mitochondrial genome. Binds to mitochondrial promoters and RNA in a single-stranded, site-specific, and strand-specific manner. May regulate mitochondrial DNA replication and/or gene expression using site-specific, single-stranded DNA binding to target the degradation of regulatory proteins binding to adjacent sites in mitochondrial promoters. The sequence is that of Lon protease homolog, mitochondrial (Lonp1) from Mus musculus (Mouse).